The primary structure comprises 61 residues: Potassium channel toxin alpha-KTx 5.3 (61 aa).

An N-terminal signal peptide occupies residues 1-28 (MHNYYKIVLIMVAFFAVIITFSNIQVEG). Disulfide bonds link Cys-31–Cys-49, Cys-36–Cys-54, and Cys-40–Cys-56. Positions 34–37 (KRCQ) are [R/K]XCQ motif. The residue at position 59 (His-59) is a Histidine amide.

Belongs to the short scorpion toxin superfamily. Potassium channel inhibitor family. Alpha-KTx 05 subfamily. Expressed by the venom gland.

It localises to the secreted. Functionally, blocks small conductance calcium-activated potassium channels (KCNN, SK). Has also been shown to weakly inhibit Kv11.1/KCNH2/ERG1, Kv1.2/KCNA2, Kv1.3/KCNA3 and Kv2.1/KCNB1 voltage-gated potassium channels. This Olivierus martensii (Manchurian scorpion) protein is Potassium channel toxin alpha-KTx 5.3.